The following is a 379-amino-acid chain: Flagellin A (379 aa).

Coiled-coil stretches lie at residues Thr103 to Glu128 and Tyr302 to Thr341.

The protein belongs to the bacterial flagellin family. As to quaternary structure, heteromer of multiple flagellin subunits including FlaA, FlaB, FlaC, FlaD and possibly FlaE.

The protein localises to the secreted. It localises to the bacterial flagellum. In terms of biological role, flagellin is the subunit protein which polymerizes to form the filaments of bacterial flagella. FlaA is essential for flagellar synthesis and full motility. Important for virulence at two different levels: is needed for crossing the fish integument and may play a role once the bacterium has entered the host. This Vibrio anguillarum (Listonella anguillarum) protein is Flagellin A (flaA).